The sequence spans 156 residues: Transcriptional repressor NrdR (156 aa).

Residues 3 to 34 fold into a zinc finger; it reads CPFCGSMDTRVLDSRPTLDGTAIRRRRECSSC. The 91-residue stretch at 49–139 folds into the ATP-cone domain; that stretch reads VLVVKKDGRR…VYRDFREVDQ (91 aa).

The protein belongs to the NrdR family. The cofactor is Zn(2+).

Negatively regulates transcription of bacterial ribonucleotide reductase nrd genes and operons by binding to NrdR-boxes. In Thermotoga maritima (strain ATCC 43589 / DSM 3109 / JCM 10099 / NBRC 100826 / MSB8), this protein is Transcriptional repressor NrdR.